A 321-amino-acid polypeptide reads, in one-letter code: MASSSFTSLSVMVLLCLAAAAVASAQLSPTFYSRSCPRALATIKAAVTAAVAQEARMGASLLRLHFHDCFVQGCDGSVLLNDTATFTGEQTANPNVGSIRGFGVVDNIKAQVEAVCPGVVSCADILAVAARDSVVALGGPSWRVLLGRRDSTTASLALANSDLPAPSLDLANLTAAFAKKRLSRTDLVALSGAHTIGLAQCKNFRAHIYNDTNVNAAFATLRRANCPAAAGNGDGNLAPLDTATPTAFDNAYYTNLLAQRGLLHSDQQLFNGGATDGLVRTYASTPRRFSRDFAAAMIRMGNISPLTGTQGQIRRACSRVN.

An N-terminal signal peptide occupies residues Met-1–Ala-25. A Pyrrolidone carboxylic acid modification is found at Gln-26. Intrachain disulfides connect Cys-36-Cys-116, Cys-69-Cys-74, Cys-122-Cys-317, and Cys-201-Cys-226. His-67 acts as the Proton acceptor in catalysis. Residues Asp-68, Val-71, Gly-73, Asp-75, and Ser-77 each coordinate Ca(2+). Asn-81 carries N-linked (GlcNAc...) asparagine glycosylation. Pro-164 contacts substrate. Asn-172 is a glycosylation site (N-linked (GlcNAc...) asparagine). His-194 contributes to the heme b binding site. Thr-195 provides a ligand contact to Ca(2+). Residue Asn-210 is glycosylated (N-linked (GlcNAc...) asparagine). Ca(2+)-binding residues include Asp-241, Thr-244, and Asp-249.

The protein belongs to the peroxidase family. Classical plant (class III) peroxidase subfamily. Requires heme b as cofactor. The cofactor is Ca(2+).

The protein resides in the secreted. It catalyses the reaction 2 a phenolic donor + H2O2 = 2 a phenolic radical donor + 2 H2O. Removal of H(2)O(2), oxidation of toxic reductants, biosynthesis and degradation of lignin, suberization, auxin catabolism, response to environmental stresses such as wounding, pathogen attack and oxidative stress. These functions might be dependent on each isozyme/isoform in each plant tissue. The polypeptide is Peroxidase 70 (PER70) (Zea mays (Maize)).